The chain runs to 163 residues: Bacterial ISG15-like ubiquitin-like protein BilA (163 aa).

2 consecutive Ubiquitin-like BIL-type domains span residues 4–80 (LVVF…RCKR) and 81–163 (IRAT…RIEG). Gly-163 is covalently cross-linked (Glycyl lysine isopeptide (Gly-Lys) (interchain with K-? in central tail fiber acceptor protein)).

Functionally, component of the Bil (bacterial ISG15-like) antiviral defense system, composed of BilA, BilB, BilC and BilD. The Bil system specifically conjugates a ubiquitin-like moiety (bilA) to the bacteriophage central tail fiber (CTF, or tip attachment protein J) via reactions involving E1 (bilD) and E2 (bilB). Modifies CTF of phage SECphi27 and SECphi4, which probably interferes with assembly of the phage tail. Also modifies T5 baseplate hub protein pb3 (gene D16), but not gp27 of phage T6 (Bil defends against T6). Bil-encoding bacteria produce mostly defective phage SECphi27, many of which have phage assembly defects, including no tails. SECphi27 phage progeny produced in E.coli with the Bil system inject less DNA into naive host cells, maybe because the phage are less able to adsorb and inject their DNA into host cells. In terms of biological role, expression of the Bil system in E.coli (strain MG1655) confers about 100-fold resistance to phage SECphi27, SECphi18, SECphi6, SECphi4 and T5, but not to SECphi17. When cells expressing the Bil system are infected by phage SECphi27 at low multiplicity of infection (0.03 MOI) the culture survives, at 3.0 MOI the culture collapses at the same time as cells without the Bil system. The chain is Bacterial ISG15-like ubiquitin-like protein BilA from Collimonas sp. (strain OK412).